A 517-amino-acid chain; its full sequence is Aldehyde dehydrogenase, mitochondrial (517 aa).

The transit peptide at 1-17 (MLRAAARFGPRLGRRLL) directs the protein to the mitochondrion. The SIFI-degron motif lies at 9 to 24 (GPRLGRRLLSAAATQA). N6-acetyllysine occurs at positions 52, 73, 78, and 159. Residue 262–267 (GSTEIG) coordinates NAD(+). Catalysis depends on Glu-285, which acts as the Proton acceptor. Residue Cys-319 is the Nucleophile of the active site. N6-acetyllysine occurs at positions 368, 383, 426, 428, and 451.

It belongs to the aldehyde dehydrogenase family. As to quaternary structure, homotetramer. In response to mitochondrial stress, the precursor protein is ubiquitinated by the SIFI complex in the cytoplasm before mitochondrial import, leading to its degradation. Within the SIFI complex, UBR4 initiates ubiquitin chain that are further elongated or branched by KCMF1.

Its subcellular location is the mitochondrion matrix. It carries out the reaction an aldehyde + NAD(+) + H2O = a carboxylate + NADH + 2 H(+). The protein operates within alcohol metabolism; ethanol degradation; acetate from ethanol: step 2/2. Its function is as follows. Required for clearance of cellular formaldehyde, a cytotoxic and carcinogenic metabolite that induces DNA damage. This Homo sapiens (Human) protein is Aldehyde dehydrogenase, mitochondrial (ALDH2).